The chain runs to 117 residues: Con-Ins T3 (117 aa).

The signal sequence occupies residues 1–24; the sequence is MTTSFYFLLMALGLLLYVCQSSFG. Positions 25-29 are excised as a propeptide; it reads NQHTR. Proline 34 is subject to 4-hydroxyproline; partial. 3 disulfide bridges follow: cysteine 38/cysteine 101, cysteine 50/cysteine 114, and cysteine 100/cysteine 105. Positions 53 to 94 are cleaved as a propeptide — c peptide; sequence KRNDAGKKRGQASPLWQRGGSLSMLKARAKRNEAFHLQRAHR. A 4-carboxyglutamate modification is found at glutamate 98. Residue glutamate 109 is modified to 4-carboxyglutamate; partial. Residue cysteine 114 is modified to Cysteine amide. The propeptide occupies 116–117; that stretch reads NS.

It belongs to the insulin family. As to quaternary structure, heterodimer of A and B chains; disulfide-linked. As to expression, expressed by the venom gland.

The protein localises to the secreted. Functionally, this venom insulin facilitates prey capture by rapidly inducing hypoglycemic shock. It is one of the smallest known insulin found in nature and lacks the C-terminal segment of the B chain that, in human insulin, mediates engagement of the insulin receptor (INSR) and assembly of the hormone's hexameric storage form. Despite lacking this segment, it both binds and activates human insulin receptor (long isoform (HIR-B) OF INSR) with only a 10-fold lower potency. In vivo, intraperitoneal injection of this peptide into zebrafish lowers blood glucose with the same potency than human insulin. In addition, when applied to water, this peptide reduces overall locomotor activity of zebrafish larvae, observed as a significant decrease in the percentage of time spent swimming and movement frequency. The polypeptide is Con-Ins T3 (Conus tulipa (Fish-hunting cone snail)).